Here is a 559-residue protein sequence, read N- to C-terminus: MSKVPSDIEIAQAAKMKPVMELARGLGIQEDEVELYGKYKAKISLDVYRRLKDKPDGKLILVTAITPTPAGEGKTTTSVGLTDALARLGKRVMVCLREPSLGPSFGIKGGAAGGGYAQVVPMEDINLHFTGDIHAVTYAHNLLAAMVDNHLQQGNVLNIDPRTITWRRVIDLNDRALRNIVIGLGGKANGVPRETGFDISVASEVMACLCLASDLMDLKERFSRIVVGYTYDGKPVTAGDLEAQGSMALLMKDAIKPNLVQTLENTPAFIHGGPFANIAHGCNSIIATKTALKLADYVVTEAGFGADLGAEKFYDVKCRYAGFKPDATVIVATVRALKMHGGVPKSDLATENLEALREGFANLEKHIENIGKFGVPAVVAINAFPTDTEAELNLLYELCAKAGAEVALSEVWAKGGEGGLELARKVLQTLESRPSNFHVLYNLDLSIKDKIAKIATEIYGADGVNYTAEADKAIQRYESLGYGNLPVVMAKTQYSFSDDMTKLGRPRNFTITVREVRLSAGAGFIVPITGAIMTMPGLPKRPAACNIDIDADGVITGLF.

68–75 (TPAGEGKT) serves as a coordination point for ATP.

The protein belongs to the formate--tetrahydrofolate ligase family.

It catalyses the reaction (6S)-5,6,7,8-tetrahydrofolate + formate + ATP = (6R)-10-formyltetrahydrofolate + ADP + phosphate. It functions in the pathway one-carbon metabolism; tetrahydrofolate interconversion. This chain is Formate--tetrahydrofolate ligase, found in Moorella thermoacetica (strain ATCC 39073 / JCM 9320).